The chain runs to 267 residues: Placental prolactin-related protein 2 (267 aa).

Residues Asn99 and Asn121 are each glycosylated (N-linked (GlcNAc...) asparagine). Cystine bridges form between Cys126-Cys244 and Cys261-Cys267.

Belongs to the somatotropin/prolactin family.

Its subcellular location is the secreted. Its function is as follows. Placental prolactin-related proteins may play a specific role during gestation. This is Placental prolactin-related protein 2 (PRP2) from Bos taurus (Bovine).